The chain runs to 197 residues: Na(+)-translocating NADH-quinone reductase subunit E (197 aa).

6 helical membrane-spanning segments follow: residues S11–V31, V35–V55, F76–F96, L108–M128, V139–I159, and L175–I195.

The protein belongs to the NqrDE/RnfAE family. As to quaternary structure, composed of six subunits; NqrA, NqrB, NqrC, NqrD, NqrE and NqrF.

The protein localises to the cell inner membrane. It carries out the reaction a ubiquinone + n Na(+)(in) + NADH + H(+) = a ubiquinol + n Na(+)(out) + NAD(+). Its function is as follows. NQR complex catalyzes the reduction of ubiquinone-1 to ubiquinol by two successive reactions, coupled with the transport of Na(+) ions from the cytoplasm to the periplasm. NqrA to NqrE are probably involved in the second step, the conversion of ubisemiquinone to ubiquinol. The protein is Na(+)-translocating NADH-quinone reductase subunit E of Neisseria meningitidis serogroup B (strain ATCC BAA-335 / MC58).